The chain runs to 386 residues: Succinate--CoA ligase [ADP-forming] subunit beta (386 aa).

One can recognise an ATP-grasp domain in the interval 9–244 (KEILRNFGVP…LDEEDPAEVE (236 aa)). Residues Lys-46, 53-55 (GRG), Glu-99, Ala-102, and Glu-107 each bind ATP. Residues Asn-199 and Asp-213 each coordinate Mg(2+). Residues Asn-264 and 321–323 (GIM) contribute to the substrate site.

The protein belongs to the succinate/malate CoA ligase beta subunit family. Heterotetramer of two alpha and two beta subunits. Requires Mg(2+) as cofactor.

The enzyme catalyses succinate + ATP + CoA = succinyl-CoA + ADP + phosphate. It carries out the reaction GTP + succinate + CoA = succinyl-CoA + GDP + phosphate. It functions in the pathway carbohydrate metabolism; tricarboxylic acid cycle; succinate from succinyl-CoA (ligase route): step 1/1. Functionally, succinyl-CoA synthetase functions in the citric acid cycle (TCA), coupling the hydrolysis of succinyl-CoA to the synthesis of either ATP or GTP and thus represents the only step of substrate-level phosphorylation in the TCA. The beta subunit provides nucleotide specificity of the enzyme and binds the substrate succinate, while the binding sites for coenzyme A and phosphate are found in the alpha subunit. In Polaromonas naphthalenivorans (strain CJ2), this protein is Succinate--CoA ligase [ADP-forming] subunit beta.